The primary structure comprises 639 residues: Threonine--tRNA ligase (639 aa).

Residues 1–61 (MIRITLPDNS…DHDARLQIIT (61 aa)) form the TGS domain. Positions 242–533 (DHRRLGRELD…LIEQHAGALP (292 aa)) are catalytic. Zn(2+)-binding residues include C333, H384, and H510.

The protein belongs to the class-II aminoacyl-tRNA synthetase family. Homodimer. Requires Zn(2+) as cofactor.

The protein resides in the cytoplasm. The enzyme catalyses tRNA(Thr) + L-threonine + ATP = L-threonyl-tRNA(Thr) + AMP + diphosphate + H(+). Catalyzes the attachment of threonine to tRNA(Thr) in a two-step reaction: L-threonine is first activated by ATP to form Thr-AMP and then transferred to the acceptor end of tRNA(Thr). Also edits incorrectly charged L-seryl-tRNA(Thr). This Paracidovorax citrulli (strain AAC00-1) (Acidovorax citrulli) protein is Threonine--tRNA ligase.